The following is a 649-amino-acid chain: DNA mismatch repair protein MutL (649 aa).

Belongs to the DNA mismatch repair MutL/HexB family.

Functionally, this protein is involved in the repair of mismatches in DNA. It is required for dam-dependent methyl-directed DNA mismatch repair. May act as a 'molecular matchmaker', a protein that promotes the formation of a stable complex between two or more DNA-binding proteins in an ATP-dependent manner without itself being part of a final effector complex. In Streptococcus pneumoniae serotype 2 (strain D39 / NCTC 7466), this protein is DNA mismatch repair protein MutL.